A 313-amino-acid chain; its full sequence is Coproporphyrin III ferrochelatase (313 aa).

Fe(2+) is bound by residues His-191 and Glu-270.

It belongs to the ferrochelatase family.

It localises to the cytoplasm. The enzyme catalyses Fe-coproporphyrin III + 2 H(+) = coproporphyrin III + Fe(2+). It functions in the pathway porphyrin-containing compound metabolism; protoheme biosynthesis. Involved in coproporphyrin-dependent heme b biosynthesis. Catalyzes the insertion of ferrous iron into coproporphyrin III to form Fe-coproporphyrin III. In Enterococcus faecalis (strain ATCC 700802 / V583), this protein is Coproporphyrin III ferrochelatase.